The primary structure comprises 636 residues: Epithelial sodium channel subunit alpha (636 aa).

The disordered stretch occupies residues 1–28; sequence MKSENQPEDKRIGKLKREANMQKMKEAA. At 1-77 the chain is on the cytoplasmic side; the sequence is MKSENQPEDK…VCSKKNRMKT (77 aa). A helical transmembrane segment spans residues 78–98; the sequence is AFWSILFFFTFGLMYWQFGII. Topologically, residues 99–549 are extracellular; sequence YREYFSFPVN…SQWSLWFGSS (451 aa). 10 cysteine pairs are disulfide-bonded: Cys126/Cys293, Cys218/Cys225, Cys270/Cys277, Cys381/Cys466, Cys403/Cys443, Cys403/Cys462, Cys407/Cys458, Cys416/Cys443, Cys416/Cys466, and Cys418/Cys432. A helical membrane pass occupies residues 550 to 570; the sequence is VLSVVELVELILDFIAITCIL. Residues 571-636 lie on the Cytoplasmic side of the membrane; it reads AIHWLNMNRS…LRRVSSQQTE (66 aa).

It belongs to the amiloride-sensitive sodium channel (TC 1.A.6) family. SCNN1A subfamily. In terms of assembly, heterotrimer; containing an alpha/SCNN1A, a beta/SCNN1B and a gamma/SCNN1G subunit.

It is found in the apical cell membrane. The protein resides in the cell projection. The protein localises to the cilium. Its subcellular location is the cytoplasmic granule. It localises to the cytoplasm. It is found in the cytoplasmic vesicle. The protein resides in the secretory vesicle. The protein localises to the acrosome. Its subcellular location is the flagellum. It catalyses the reaction Na(+)(in) = Na(+)(out). With respect to regulation, originally identified and characterized by its inhibition by the diuretic drug amiloride. In terms of biological role, this is one of the three pore-forming subunits of the heterotrimeric epithelial sodium channel (ENaC), a critical regulator of sodium balance and fluid homeostasis. ENaC operates in epithelial tissues, where it mediates the electrodiffusion of sodium ions from extracellular fluid through the apical membrane of cells, with water following osmotically. The sequence is that of Epithelial sodium channel subunit alpha from Anolis carolinensis (Green anole).